The sequence spans 122 residues: Large ribosomal subunit protein uL14 (122 aa).

It belongs to the universal ribosomal protein uL14 family. In terms of assembly, part of the 50S ribosomal subunit. Forms a cluster with proteins L3 and L19. In the 70S ribosome, L14 and L19 interact and together make contacts with the 16S rRNA in bridges B5 and B8.

Its function is as follows. Binds to 23S rRNA. Forms part of two intersubunit bridges in the 70S ribosome. This chain is Large ribosomal subunit protein uL14, found in Malacoplasma penetrans (strain HF-2) (Mycoplasma penetrans).